We begin with the raw amino-acid sequence, 445 residues long: Methylphloroacetophenone oxidase (445 aa).

Residues 25 to 45 traverse the membrane as a helical segment; that stretch reads VLSIALIGVACAISIRSILYV. A glycan (N-linked (GlcNAc...) asparagine) is linked at asparagine 51.

It belongs to the cytochrome P450 family.

The protein localises to the membrane. It participates in secondary metabolite biosynthesis. Methylphloroacetophenone oxidase; part of the gene cluster that mediates the biosynthesis of usnic acid, a dibenzofuran lichen product possessing a broad spectrum of biological activities. Two genes, mpas and mpao, comprise the usnic acid biosynthetic gene cluster with a single post-PKS enzyme, the methylphloracetophenone oxidase (mpao). The methylphloroacetophenone synthase (mpas) is a non-reducing polyketide synthase that produces methylphloracetophenone from acetate via a methylated tetraketide intermediate. The methylphloroacetophenone oxidase then carries out the oxidative dimerization of methylphloracetophenone to usnic acid. This Cladonia uncialis (Cup lichen) protein is Methylphloroacetophenone oxidase.